The chain runs to 503 residues: Hemogen (503 aa).

Basic residues-rich tracts occupy residues 1–10 and 61–79; these read MDMGKGRPRL and KKRK…RKRQ. The disordered stretch occupies residues 1–129; the sequence is MDMGKGRPRL…PLVPSPTKAV (129 aa). Residues 7–87 form a necessary for nuclear localization region; the sequence is RPRLKLPQMP…RQGNVEQKAE (81 aa). Residues Ser-90, Ser-103, Ser-124, Ser-153, Ser-158, Ser-171, Ser-213, Ser-223, Ser-228, Ser-241, and Ser-269 each carry the phosphoserine modification. The residue at position 286 (Thr-286) is a Phosphothreonine. Residues 381-503 form a disordered region; that stretch reads QKTIQESPEP…ENGIYSSALF (123 aa). Residues 385-396 are compositionally biased toward low complexity; that stretch reads QESPEPEQYSPE. Phosphoserine occurs at positions 387 and 394. Residues 426-436 show a composition bias toward basic and acidic residues; that stretch reads CQDREEPKHSL.

In terms of tissue distribution, expressed in hematopoietic precursor cells. Highly expressed in bone marrow, the red pulp of the spleen and round spermatids. Weakly expressed in peripheral blood cells.

It localises to the nucleus. Its function is as follows. Regulates the proliferation and differentiation of hematopoietic cells. Overexpression block the TPA-induced megakaryocytic differentiation in the K562 cell model. May also prevent cell apoptosis through the activation of the nuclear factor-kappa B (NF-kB). The polypeptide is Hemogen (Hemgn) (Mus musculus (Mouse)).